The sequence spans 346 residues: N-acetyl-gamma-glutamyl-phosphate reductase (346 aa).

The active site involves cysteine 149.

This sequence belongs to the NAGSA dehydrogenase family. Type 1 subfamily.

It localises to the cytoplasm. It carries out the reaction N-acetyl-L-glutamate 5-semialdehyde + phosphate + NADP(+) = N-acetyl-L-glutamyl 5-phosphate + NADPH + H(+). The protein operates within amino-acid biosynthesis; L-arginine biosynthesis; N(2)-acetyl-L-ornithine from L-glutamate: step 3/4. In terms of biological role, catalyzes the NADPH-dependent reduction of N-acetyl-5-glutamyl phosphate to yield N-acetyl-L-glutamate 5-semialdehyde. The chain is N-acetyl-gamma-glutamyl-phosphate reductase from Oceanobacillus iheyensis (strain DSM 14371 / CIP 107618 / JCM 11309 / KCTC 3954 / HTE831).